The following is a 202-amino-acid chain: Small ribosomal subunit protein uS5 (202 aa).

The 64-residue stretch at L50–V113 folds into the S5 DRBM domain.

Belongs to the universal ribosomal protein uS5 family. As to quaternary structure, part of the 30S ribosomal subunit. Contacts protein S4.

Its function is as follows. With S4 and S12 plays an important role in translational accuracy. In Pyrobaculum arsenaticum (strain DSM 13514 / JCM 11321 / PZ6), this protein is Small ribosomal subunit protein uS5.